A 559-amino-acid polypeptide reads, in one-letter code: Actin-binding protein WASF1 (559 aa).

3 disordered regions span residues 170–202, 304–383, and 412–490; these read EDKR…DRRR, IENR…GVLH, and VHPL…HPST. Residues 182-202 show a composition bias toward basic and acidic residues; the sequence is KNLDRPHEPEKVPRAPHDRRR. The span at 304 to 313 shows a compositional bias: polar residues; sequence IENRPQSPAT. A compositionally biased stretch (pro residues) spans 322 to 332; it reads PTPPPPPPPLP. Low complexity predominate over residues 333–346; the sequence is SALSTSSLRASMTS. Arg-341 is subject to Asymmetric dimethylarginine; alternate. Residue Arg-341 is modified to Omega-N-methylarginine; alternate. Composition is skewed to pro residues over residues 347–360, 423–437, and 460–477; these read TPPP…PPPA, LPPP…PPGI, and STAP…PPSQ. At Ser-489 the chain carries Phosphoserine. The region spanning 497–514 is the WH2 domain; the sequence is ARSVLLEAIRKGIQLRKV.

This sequence belongs to the SCAR/WAVE family. As to quaternary structure, component of the WAVE1 complex composed of ABI2, CYFIP1 or CYFIP2, BRK1, NCKAP1 and WASF1/WAVE1. Within the complex, a heterodimer containing NCKAP1 and CYFIP1 interacts with a heterotrimer formed by WAVE1, ABI2 and BRK1. CYFIP2 binds to activated RAC1 which causes the complex to dissociate, releasing activated WASF1. The complex can also be activated by NCK1. Binds actin and the Arp2/3 complex. Interacts with BAIAP2. Interacts with SHANK3; the interaction mediates the association of SHANK3 with the WAVE1 complex. Interacts with ABI1 (via N-terminus). Interacts with SORBS2; this interaction greatly enhances phosphorylation by ABL1 and dephosphorylation by PTPN12 and might mediate partial to focal adhesion sites.

Its subcellular location is the cytoplasm. It localises to the cytoskeleton. It is found in the synapse. The protein resides in the cell junction. The protein localises to the focal adhesion. Downstream effector molecule involved in the transmission of signals from tyrosine kinase receptors and small GTPases to the actin cytoskeleton. Promotes formation of actin filaments. Part of the WAVE complex that regulates lamellipodia formation. The WAVE complex regulates actin filament reorganization via its interaction with the Arp2/3 complex. As component of the WAVE1 complex, required for BDNF-NTRK2 endocytic trafficking and signaling from early endosomes. Also involved in the regulation of mitochondrial dynamics. This is Actin-binding protein WASF1 (WASF1) from Pongo abelii (Sumatran orangutan).